A 605-amino-acid chain; its full sequence is MYFSSLCKFLPISEKEKIYLNIVKKRFCKSNIYYNNNNNNIINYNKRGLKFYPFCNNLKKNINFVNINNKKGINFHSINKERKMASEVPQVVSLDPTSIPIEYNTPIHDIKVQVYDIKGGCNVEEGLTIFLVNNPGKENGPVKISSKVNDKNVSEFLKDENMEKFNVKLGTSKHFYMFNDNKNSVAVGYVGCGSVADLSEADMKRVVLSLVTMLHDNKLSKLTVVFEINVDKNLFRFFLETLFYEYMTDERFKSTDKNVNMEYIKHLGVYINNADTYKEEVEKARVYYFGTYYASQLIAAPSNYCNPVSLSNAAVELAQKLNLEYKILGVKELEELKMGAYLSVGKGSMYPNKFIHLTYKSKGDVKKKIALVGKGITFDSGGYNLKAAPGSMIDLMKFDMSGCAAVLGCAYCVGTLKPENVEIHFLSAVCENMVSKNSYRPGDIITASNGKTIEVGNTDAEGRLTLADALVYAEKLGVDYIVDIATLTGAMLYSLGTSYAGVFGNNEELINKILNSSKTSNEPVWWLPIINEYRATLNSKYADINNISSSVKASSIVASLFLKEFVQNTAWAHIDIAGVSWNFKARKPKGFGVRLLTEFVLNDAL.

A peptide is bound by residues lysine 374, aspartate 379, and lysine 386. Positions 374 and 379 each coordinate Zn(2+). The tract at residues 384–401 (NLKAAPGSMIDLMKFDMS) is L13 loop. Residue lysine 386 is part of the active site. Zn(2+) contacts are provided by aspartate 394, methionine 396, aspartate 399, aspartate 459, and glutamate 461. Aspartate 399 and aspartate 459 together coordinate a peptide. Residue arginine 463 is part of the active site.

This sequence belongs to the peptidase M17 family. In terms of assembly, homohexamer composed of dimer of trimers. Both the identity and concentration of metal ions available dictate the extent to which oligomerization occurs; Mn(2+) and Co(2+) induces oligomerization, whereas Mg(2+) has no effect, and Zn(2+) causes irreversible protein aggregation in vitro. Zn(2+) is required as a cofactor.

The protein localises to the cytoplasm. It carries out the reaction Release of an N-terminal amino acid, Xaa-|-Yaa-, in which Xaa is preferably Leu, but may be other amino acids including Pro although not Arg or Lys, and Yaa may be Pro. Amino acid amides and methyl esters are also readily hydrolyzed, but rates on arylamides are exceedingly low.. It catalyses the reaction L-cysteinylglycine + H2O = L-cysteine + glycine. Oligomerization is required for catalytic activity and is metal-dependent. The type of metal that binds the 2 metal binding sites influences catalytic activity and substrate specificity. In vitro, activated by Co(2+), Mn(2+), Ni(2+), Mg(2+) and Zn(2+) with decreasing strength. Occupancy of the site 2 is essential and sufficient for activating the enzyme but occupation of the 2 sites is necessary for full catalytic activity. Inhibited by fungal metabolite bestatin. Inhibited by Phe-Naphthyl (PNAP). Its function is as follows. Aminopeptidase which preferentially cleaves leucine residues from the N-terminus of peptides. Also, has some activity towards tryptophan and methionine and to a lesser extent towards phenylalanine. Has very low activity or no activity towards the other amino acids. In addition, cleaves the Cys-Gly dipeptide, probably as part of the glutathione regulation pathway; cleavage only occurs in the presence of Mn(2+). During the asexual blood stage, plays a role in the final step of host hemoglobin catabolism, by cleaving hemoglobin-derived oligopeptides providing a source of amino acids for the parasite protein synthesis and for the maintenance of osmotic homeostasis. During the asexual blood stage, may also play a role during the ring-trophozoite transition. The chain is Leucine aminopeptidase from Plasmodium falciparum (isolate 3D7).